The chain runs to 128 residues: Fluoride-specific ion channel FluC (128 aa).

The next 4 helical transmembrane spans lie at 10-30 (FLAVAIGAALGACARWLAGLW), 40-60 (TLLVNLAGGYLIGLALAVLLA), 71-91 (AAVTGFLGGLTTFSTFSAETV), and 102-122 (ALGYAALSLVGSLALTALGLA). Positions 78 and 81 each coordinate Na(+).

Belongs to the fluoride channel Fluc/FEX (TC 1.A.43) family.

The protein resides in the cell inner membrane. It carries out the reaction fluoride(in) = fluoride(out). With respect to regulation, na(+) is not transported, but it plays an essential structural role and its presence is essential for fluoride channel function. Its function is as follows. Fluoride-specific ion channel. Important for reducing fluoride concentration in the cell, thus reducing its toxicity. The chain is Fluoride-specific ion channel FluC from Bordetella petrii (strain ATCC BAA-461 / DSM 12804 / CCUG 43448).